The chain runs to 75 residues: Caerin-1.1 (75 aa).

A signal peptide spans 1–22 (MASLKKSLFLVLLLGFVSVSIC). Positions 23 to 49 (EEEKRQEDEDEHEEEGESQEEGSEEKR) are excised as a propeptide. Residues 24–49 (EEKRQEDEDEHEEEGESQEEGSEEKR) are disordered. A compositionally biased stretch (acidic residues) spans 30–45 (DEDEHEEEGESQEEGS). Position 74 is a leucine amide (Leu74).

It belongs to the frog skin active peptide (FSAP) family. Caerin subfamily. The major product is Caerin-1.1; in addition, different peptides are produced that are missing some amino acid residues at the N-terminus or C-terminus. Caerin-1.1.1 and Caerin-1.1.4 are inactive. Expressed by the skin parotoid and/or rostral glands.

Its subcellular location is the secreted. Its function is as follows. Antimicrobial peptide with antibacterial and antiviral activities. Adopts an alpha helical conformation which can disrupt bacterial membranes. Inhibits the formation of NO by neuronal nitric oxide synthase (nNOS) at micromolar concentrations. Acts by a non-competitive mechanism, probably by binding to calcium/calmodulin and as a consequence blocking calmodulin attachment to nNOS. Is inactive. The sequence is that of Caerin-1.1 from Ranoidea caerulea (Green tree frog).